The chain runs to 266 residues: Phosphatidylglycerol--prolipoprotein diacylglyceryl transferase (266 aa).

7 consecutive transmembrane segments (helical) span residues 21–41, 60–80, 95–115, 124–144, 176–196, 203–223, and 236–256; these read LAIRWYGLMYLVGFLFAMWLA, LLFAGFLGVVLGGRIGYVLFY, VWTGGMSFHGGLLGVMTAMLW, FFSVADFIAPLVPFGLGMGRM, SQLYEAFLEGFVLLIILNIFI, GAVSGLFLIGYGSFRFIIEYF, and WISMGQILSSPMIIFGALLML. Arginine 143 contacts a 1,2-diacyl-sn-glycero-3-phospho-(1'-sn-glycerol).

This sequence belongs to the Lgt family.

It is found in the cell inner membrane. It carries out the reaction L-cysteinyl-[prolipoprotein] + a 1,2-diacyl-sn-glycero-3-phospho-(1'-sn-glycerol) = an S-1,2-diacyl-sn-glyceryl-L-cysteinyl-[prolipoprotein] + sn-glycerol 1-phosphate + H(+). The protein operates within protein modification; lipoprotein biosynthesis (diacylglyceryl transfer). In terms of biological role, catalyzes the transfer of the diacylglyceryl group from phosphatidylglycerol to the sulfhydryl group of the N-terminal cysteine of a prolipoprotein, the first step in the formation of mature lipoproteins. The polypeptide is Phosphatidylglycerol--prolipoprotein diacylglyceryl transferase (Photobacterium profundum (strain SS9)).